The following is a 66-amino-acid chain: LTCVTSKSIFGITTENCPDGQNLCFKKWYYIVPRYSDITWGCAATCPKPTNVRETIRCCETDKCNE.

Intrachain disulfides connect Cys3–Cys24, Cys17–Cys42, Cys46–Cys58, and Cys59–Cys64.

This sequence belongs to the three-finger toxin family. Short-chain subfamily. Aminergic toxin sub-subfamily. In terms of tissue distribution, expressed by the venom gland.

It localises to the secreted. Shows a non-competitive interaction with adrenergic and muscarinic receptors. Binds to alpha-2b (ADRA2B) (IC(50)=2.3 nM), alpha-1a (ADRA1A), alpha-1b (ADRA1B), and alpha-2c (ADRA2C) adrenergic receptors. Reversibly binds to M1 (CHRM1) muscarinic acetylcholine receptors, probably by interacting with the orthosteric site. Also reveals a slightly weaker effect at M3 (CHRM3) and M4 (CHRM4) receptors. The order of potency is ADRA2B&gt;&gt;CHRM1&gt;ADRA1A&gt;ADRA1B&gt;ADRA2C/CHRM4. The chain is Muscarinic toxin 1 from Dendroaspis angusticeps (Eastern green mamba).